The sequence spans 379 residues: Chaperone protein DnaJ (379 aa).

The J domain maps to 5-69 (EFYDRLGVSK…QKRAAYDQYG (65 aa)). The CR-type zinc finger occupies 135-217 (GAEKEVSYNR…CHGTGHEKKT (83 aa)). Positions 148, 151, 165, 168, 191, 194, 205, and 208 each coordinate Zn(2+). CXXCXGXG motif repeat units follow at residues 148–155 (CHTCSGSG), 165–172 (CQKCHGSG), 191–198 (CDVCQGSG), and 205–212 (CPTCHGTG).

Belongs to the DnaJ family. Homodimer. Zn(2+) serves as cofactor.

It is found in the cytoplasm. Functionally, participates actively in the response to hyperosmotic and heat shock by preventing the aggregation of stress-denatured proteins and by disaggregating proteins, also in an autonomous, DnaK-independent fashion. Unfolded proteins bind initially to DnaJ; upon interaction with the DnaJ-bound protein, DnaK hydrolyzes its bound ATP, resulting in the formation of a stable complex. GrpE releases ADP from DnaK; ATP binding to DnaK triggers the release of the substrate protein, thus completing the reaction cycle. Several rounds of ATP-dependent interactions between DnaJ, DnaK and GrpE are required for fully efficient folding. Also involved, together with DnaK and GrpE, in the DNA replication of plasmids through activation of initiation proteins. The polypeptide is Chaperone protein DnaJ (Streptococcus agalactiae serotype V (strain ATCC BAA-611 / 2603 V/R)).